Consider the following 296-residue polypeptide: MELRHLRYFVAVAQALNFTRAAEKLHTSQPSLSSQIRDLENCVGVPLLVRDKRKVALTAAGECFLQDALAILEQAENAKLRARKIVQEDRQLTIGFVPSAEVNLLPKVLPMFRLRQPDTLIELVSLITTQQEEKIRRGELDVGLMRHPVYSPEIDYLELFDEPLVVVLPVDHPLAHEKEITAAQLDGVNFVSTDPVYSGSLAPIVKAWFAQENSQPNIVQVATNILVTMNLVGMGLGVTLIPGYMNNFNTGQVVFRPIAGNVPSIALLMAWKKGEMKPALRDFIAIVQERLASVTA.

Residues 1–58 (MELRHLRYFVAVAQALNFTRAAEKLHTSQPSLSSQIRDLENCVGVPLLVRDKRKVALT) form the HTH lysR-type domain. Residues 18-38 (FTRAAEKLHTSQPSLSSQIRD) constitute a DNA-binding region (H-T-H motif).

This sequence belongs to the LysR transcriptional regulatory family.

Its function is as follows. Transcriptional activator of the hca operon for 3-phenylpropionic acid catabolism. In Escherichia coli (strain K12), this protein is Hca operon transcriptional activator HcaR (hcaR).